A 176-amino-acid chain; its full sequence is Large ribosomal subunit protein uL10 (176 aa).

This sequence belongs to the universal ribosomal protein uL10 family. In terms of assembly, part of the ribosomal stalk of the 50S ribosomal subunit. The N-terminus interacts with L11 and the large rRNA to form the base of the stalk. The C-terminus forms an elongated spine to which L12 dimers bind in a sequential fashion forming a multimeric L10(L12)X complex.

Forms part of the ribosomal stalk, playing a central role in the interaction of the ribosome with GTP-bound translation factors. This is Large ribosomal subunit protein uL10 from Marinobacter nauticus (strain ATCC 700491 / DSM 11845 / VT8) (Marinobacter aquaeolei).